A 341-amino-acid chain; its full sequence is HTH-type transcriptional repressor PurR (341 aa).

The 55-residue stretch at Ala2–Val56 folds into the HTH lacI-type domain. Residues Ile4–Asn23 constitute a DNA-binding region (H-T-H motif). A DNA-binding region spans residues Ser48–Val56. Hypoxanthine contacts are provided by Tyr73, Arg190, Thr192, Phe221, and Asp275.

Homodimer.

It participates in purine metabolism; purine nucleotide biosynthesis [regulation]. Functionally, is the main repressor of the genes involved in the de novo synthesis of purine nucleotides, regulating purB, purC, purEK, purF, purHD, purL, purMN and guaBA expression. PurR is allosterically activated to bind its cognate DNA by binding the purine corepressors, hypoxanthine or guanine, thereby effecting transcription repression. The polypeptide is HTH-type transcriptional repressor PurR (Serratia proteamaculans (strain 568)).